We begin with the raw amino-acid sequence, 445 residues long: Glutamate--tRNA ligase 1 (445 aa).

Residues 8–18 carry the 'HIGH' region motif; sequence PSPTGKLHVGN. The short motif at 239-243 is the 'KMSKS' region element; that stretch reads KLSKR. Residue lysine 242 participates in ATP binding.

It belongs to the class-I aminoacyl-tRNA synthetase family. Glutamate--tRNA ligase type 1 subfamily. Monomer.

The protein localises to the cytoplasm. It carries out the reaction tRNA(Glu) + L-glutamate + ATP = L-glutamyl-tRNA(Glu) + AMP + diphosphate. Catalyzes the attachment of glutamate to tRNA(Glu) in a two-step reaction: glutamate is first activated by ATP to form Glu-AMP and then transferred to the acceptor end of tRNA(Glu). The protein is Glutamate--tRNA ligase 1 of Maricaulis maris (strain MCS10) (Caulobacter maris).